The following is a 111-amino-acid chain: Large ribosomal subunit protein uL29 (111 aa).

Positions 1–85 (MTVAKELRQK…TKKTNEAAVN (85 aa)) are large ribosomal subunit protein uL29. The tract at residues 86-111 (AWKQHLEANKAKLLKSRAKREDASKK) is unknown.

This sequence belongs to the universal ribosomal protein uL29 family.

The chain is Large ribosomal subunit protein uL29 from Mycoplasma pneumoniae (strain ATCC 29342 / M129 / Subtype 1) (Mycoplasmoides pneumoniae).